Here is a 986-residue protein sequence, read N- to C-terminus: Bifunctional glutamine synthetase adenylyltransferase/adenylyl-removing enzyme (986 aa).

The interval methionine 1 to glutamate 482 is adenylyl removase. The interval serine 486 to glycine 986 is adenylyl transferase.

It belongs to the GlnE family. Mg(2+) is required as a cofactor.

The catalysed reaction is [glutamine synthetase]-O(4)-(5'-adenylyl)-L-tyrosine + phosphate = [glutamine synthetase]-L-tyrosine + ADP. The enzyme catalyses [glutamine synthetase]-L-tyrosine + ATP = [glutamine synthetase]-O(4)-(5'-adenylyl)-L-tyrosine + diphosphate. Functionally, involved in the regulation of glutamine synthetase GlnA, a key enzyme in the process to assimilate ammonia. When cellular nitrogen levels are high, the C-terminal adenylyl transferase (AT) inactivates GlnA by covalent transfer of an adenylyl group from ATP to specific tyrosine residue of GlnA, thus reducing its activity. Conversely, when nitrogen levels are low, the N-terminal adenylyl removase (AR) activates GlnA by removing the adenylyl group by phosphorolysis, increasing its activity. The regulatory region of GlnE binds the signal transduction protein PII (GlnB) which indicates the nitrogen status of the cell. This Caulobacter vibrioides (strain ATCC 19089 / CIP 103742 / CB 15) (Caulobacter crescentus) protein is Bifunctional glutamine synthetase adenylyltransferase/adenylyl-removing enzyme.